A 433-amino-acid chain; its full sequence is Keratin, type I cytoskeletal 17 (433 aa).

The tract at residues 1–24 is disordered; it reads MTTTIRQFTSSSSIKGSSGLGGGS. Residues 1 to 83 form a head region; it reads MTTTIRQFTS…GGVDGLLAGG (83 aa). A phosphoserine mark is found at Ser-12 and Ser-13. Lys-15 participates in a covalent cross-link: Glycyl lysine isopeptide (Lys-Gly) (interchain with G-Cter in SUMO1); alternate. Residue Lys-15 forms a Glycyl lysine isopeptide (Lys-Gly) (interchain with G-Cter in SUMO2); alternate linkage. Phosphoserine is present on residues Ser-25, Ser-32, Ser-34, and Ser-39. Ser-44 carries the post-translational modification Phosphoserine; by RPS6KA1. A coil 1A region spans residues 84-120; sequence EKATMQNLNDRLASYLDKVRALEEANTELEVKIRDWY. In terms of domain architecture, IF rod spans 84–395; it reads EKATMQNLND…RLLEGEDAHL (312 aa). The residue at position 110 (Thr-110) is a Phosphothreonine. The segment at 121–138 is linker 1; the sequence is QKQAPGPARDYSAYYHTI. Positions 139-230 are coil 1B; it reads EDLKNKILVA…NHEEEMNALR (92 aa). Positions 231–250 are linker 12; sequence GQVGGEINVEMDAAPGVDLS. The tract at residues 251-392 is coil 2; that stretch reads RILSEMRDQY…TYRRLLEGED (142 aa). Lys-278 participates in a covalent cross-link: Glycyl lysine isopeptide (Lys-Gly) (interchain with G-Cter in SUMO2). Thr-279 bears the Phosphothreonine mark. Ser-323 carries the post-translational modification Phosphoserine. Residues 393–433 are tail; sequence AHLTQYKPKEPVTTRQVRTIVEEVQDGKVISSREQVHQTTR. Residues Lys-399, Lys-401, and Lys-420 each participate in a glycyl lysine isopeptide (Lys-Gly) (interchain with G-Cter in SUMO1); alternate cross-link. Residues Lys-399, Lys-401, and Lys-420 each participate in a glycyl lysine isopeptide (Lys-Gly) (interchain with G-Cter in SUMO2); alternate cross-link.

Belongs to the intermediate filament family. Heterodimer of a type I and a type II keratin. KRT17 associates with KRT6 isomers (KRT6A or KRT6B). Interacts with TRADD and SFN. Post-translationally, phosphorylation at Ser-44 occurs in a growth- and stress-dependent fashion in skin keratinocytes, it has no effect on filament organization. In terms of tissue distribution, expressed strongly in outer root sheath and medulla region of hair follicle and in the early differentiating epithelial cells (trichocytes) within the hair bulb region. Weak expression in the matrix cells of hair bulb. Also present in the sweat gland within the skin, vibrissae follicle, salivary gland, tooth and thymus.

The protein localises to the cytoplasm. Type I keratin involved in the formation and maintenance of various skin appendages, specifically in determining shape and orientation of hair. Required for the correct growth of hair follicles, in particular for the persistence of the anagen (growth) state. Modulates the function of TNF-alpha in the specific context of hair cycling. Regulates protein synthesis and epithelial cell growth through binding to the adapter protein SFN and by stimulating Akt/mTOR pathway. Involved in tissue repair. May be a marker of basal cell differentiation in complex epithelia and therefore indicative of a certain type of epithelial 'stem cells'. Acts as a promoter of epithelial proliferation by acting a regulator of immune response in skin: promotes Th1/Th17-dominated immune environment contributing to the development of basaloid skin tumors. May act as an autoantigen in the immunopathogenesis of psoriasis, with certain peptide regions being a major target for autoreactive T-cells and hence causing their proliferation. This Mus musculus (Mouse) protein is Keratin, type I cytoskeletal 17 (Krt17).